The following is a 258-amino-acid chain: Global transcriptional regulator CodY (258 aa).

The GAF domain stretch occupies residues 1–156 (MSSLLTKTRM…SATIVGMEML (156 aa)). Positions 204 to 223 (ASKIADKVGITRSVIVNALR) form a DNA-binding region, H-T-H motif.

It belongs to the CodY family.

Its subcellular location is the cytoplasm. In terms of biological role, DNA-binding global transcriptional regulator which is involved in the adaptive response to starvation and acts by directly or indirectly controlling the expression of numerous genes in response to nutrient availability. During rapid exponential growth, CodY is highly active and represses genes whose products allow adaptation to nutrient depletion. The sequence is that of Global transcriptional regulator CodY from Clostridium beijerinckii (strain ATCC 51743 / NCIMB 8052) (Clostridium acetobutylicum).